A 119-amino-acid chain; its full sequence is Large ribosomal subunit protein uL18 (119 aa).

This sequence belongs to the universal ribosomal protein uL18 family. As to quaternary structure, part of the 50S ribosomal subunit; part of the 5S rRNA/L5/L18/L25 subcomplex. Contacts the 5S and 23S rRNAs.

Functionally, this is one of the proteins that bind and probably mediate the attachment of the 5S RNA into the large ribosomal subunit, where it forms part of the central protuberance. The sequence is that of Large ribosomal subunit protein uL18 from Dinoroseobacter shibae (strain DSM 16493 / NCIMB 14021 / DFL 12).